The primary structure comprises 466 residues: Soluble pyridine nucleotide transhydrogenase (466 aa).

Glu-36–Cys-45 provides a ligand contact to FAD.

This sequence belongs to the class-I pyridine nucleotide-disulfide oxidoreductase family. Requires FAD as cofactor.

It is found in the cytoplasm. The enzyme catalyses NAD(+) + NADPH = NADH + NADP(+). Its function is as follows. Conversion of NADPH, generated by peripheral catabolic pathways, to NADH, which can enter the respiratory chain for energy generation. This chain is Soluble pyridine nucleotide transhydrogenase, found in Citrobacter koseri (strain ATCC BAA-895 / CDC 4225-83 / SGSC4696).